The primary structure comprises 491 residues: Probable glycine dehydrogenase (decarboxylating) subunit 2 (491 aa).

Lys273 carries the post-translational modification N6-(pyridoxal phosphate)lysine.

The protein belongs to the GcvP family. C-terminal subunit subfamily. The glycine cleavage system is composed of four proteins: P, T, L and H. In this organism, the P 'protein' is a heterodimer of two subunits. It depends on pyridoxal 5'-phosphate as a cofactor.

The catalysed reaction is N(6)-[(R)-lipoyl]-L-lysyl-[glycine-cleavage complex H protein] + glycine + H(+) = N(6)-[(R)-S(8)-aminomethyldihydrolipoyl]-L-lysyl-[glycine-cleavage complex H protein] + CO2. Functionally, the glycine cleavage system catalyzes the degradation of glycine. The P protein binds the alpha-amino group of glycine through its pyridoxal phosphate cofactor; CO(2) is released and the remaining methylamine moiety is then transferred to the lipoamide cofactor of the H protein. The chain is Probable glycine dehydrogenase (decarboxylating) subunit 2 from Bacillus cereus (strain AH187).